A 111-amino-acid polypeptide reads, in one-letter code: MQLMLFNLFSPALKLNTGLAILSPGAFEVHSDGIDVDNELFHYPIKKAYTPYNIHTYKTEEVVNQMNIKVKNMTLDEINNTYCNNDYYNQAIREEPIDLLDRSFSSSSWPF.

The protein is Putative protein YddJ (yddJ) of Escherichia coli (strain K12).